We begin with the raw amino-acid sequence, 129 residues long: Small ribosomal subunit protein uS11 (129 aa).

This sequence belongs to the universal ribosomal protein uS11 family. Part of the 30S ribosomal subunit. Interacts with proteins S7 and S18. Binds to IF-3.

Functionally, located on the platform of the 30S subunit, it bridges several disparate RNA helices of the 16S rRNA. Forms part of the Shine-Dalgarno cleft in the 70S ribosome. This is Small ribosomal subunit protein uS11 from Azoarcus sp. (strain BH72).